The primary structure comprises 873 residues: V-type proton ATPase 116 kDa subunit a 2 (873 aa).

Residues 1–407 (MGSLSRSEEM…TIITFPFLFS (407 aa)) lie on the Cytoplasmic side of the membrane. A helical membrane pass occupies residues 408–428 (CMFGDLGHGCIMLMAGLWFVL). Over 429-445 (REKNLQARNIKDEIFNM) the chain is Lumenal. Residues 446 to 466 (FFGGRYIILLMGLFSIHAGII) traverse the membrane as a helical segment. The Cytoplasmic segment spans residues 467–543 (YNDMFAKSFN…NKLNFLNSMK (77 aa)). The helical transmembrane segment at 544 to 564 (MKLSVILGISQMTFGVILSFF) threads the bilayer. Asn-565 and Asn-569 each carry an N-linked (GlcNAc...) asparagine glycan. Topologically, residues 565 to 574 (NHTYNKSKID) are lumenal. A helical membrane pass occupies residues 575 to 595 (IFTVFIPQMLFMGCIFMYLCL). Residues 596-614 (QIILKWLFFWTKEATVFGQ) lie on the Cytoplasmic side of the membrane. A helical membrane pass occupies residues 615–635 (IYPGSHCAPSLLIGLINMFMM). At 636-668 (KDRNAGFVVDGGKVNGEYREVETCYLSQWYPGQ) the chain is on the lumenal side. A helical membrane pass occupies residues 669 to 689 (SVIEMILVVIAVICVPVMLFG). The Cytoplasmic portion of the chain corresponds to 690–785 (KPIHHVMQQK…LWALSLAHAQ (96 aa)). A helical transmembrane segment spans residues 786–806 (LSEVLWHMVFVTGGLGISGTA). Position 807 (Gly-807) is a topological domain, lumenal. The chain crosses the membrane as a helical span at residues 808 to 828 (FIAVYVVFFIFFVLTISILVL). Topologically, residues 829–873 (MEGLSAFLHTLRLHWVEFQSKFYLGLGYPFVPYSFKTALQEAEAA) are cytoplasmic.

Belongs to the V-ATPase 116 kDa subunit family. V-ATPase is a heteromultimeric enzyme made up of two complexes: the ATP-hydrolytic V1 complex and the proton translocation V0 complex. The V1 complex consists of three catalytic AB heterodimers that form a heterohexamer, three peripheral stalks each consisting of EG heterodimers, one central rotor including subunits D and F, and the regulatory subunits C and H. The proton translocation complex V0 consists of the proton transport subunit a, a ring of proteolipid subunits c9c'', rotary subunit d, subunits e and f, and the accessory subunits vah-19/Ac45 and vah-20/PRR. Interacts with V-type proton ATPase subunit C vha-11. As to expression, expressed in the H-shaped excretory cell (at protein level). Expressed in hypodermal cells around the vulva. Expressed in the main epidermal syncytium. Expressed in the sheath cells associated with head and tail sensory organs; specifically, expressed in the apical sheath cells of the amphids and CEP neuron and in the sheath cells of the OLQ sensory organ.

Its subcellular location is the apical cell membrane. It is found in the endosome. It localises to the multivesicular body membrane. Functionally, subunit of the V0 complex of vacuolar(H+)-ATPase (V-ATPase), a multisubunit enzyme composed of a peripheral complex (V1) that hydrolyzes ATP and a membrane integral complex (V0) that translocates protons. V-ATPase is responsible for acidifying and maintaining the pH of intracellular compartments and in some cell types, is targeted to the plasma membrane, where it is responsible for acidifying the extracellular environment. Involved in the assembly of the V-ATPase complex. The V-ATPase is required for the function of the excretory canal. Independently of the V1 complex, the V0 complex of the V-ATPase is required for multivesicular body membrane fusion with the apical membrane of the epidermal cells during exosome release and thus regulates the release of cuticle components such as Hedgehog-related peptide wrt-2 but not collagen. Also, in the epidermis, regulates the trafficking of che-14 and rdy-2. Regulates the secretion of granular material found in the amphid channel and in controlling osmoregulation in the amphid pocket. This Caenorhabditis elegans protein is V-type proton ATPase 116 kDa subunit a 2.